A 556-amino-acid chain; its full sequence is MSKSIEQFPKDLSSPLIQIKSSVEKNSKLHIKELFALEPERFHNYSVKFDQLFFDYSKQRVTKNILEQLVALAKNKQLTQWINRLFSQDKINCTEQREAMHWALRLPSEYSKFPELTKQVHTQLQRMYTLVEKIHAGQYRGATGEVIQDVVNIGVGGSDLGPHMVTHALADFKVKTAKPLNVHFVSTMDGSQLSDLLHQLRPETTLFIISSKSFGTIDTLSNAQTVRQWLEKALGKHDRVVKSHFIGVSTKAEKMTEWGIIPDNQLLLWEWVGGRYSLWSCIGFPIALTIGIDGFQQLLAGAHAVDEHFQNTSFERNIPVLMALLGIWNNNFLNIQTHAVLPYDGRLKYFAAYLQQLEMESNGKSVQRDGQKVELDTCPIVWGEVGPNAQHAFYQLLHQGTQAVSCDFMAPIQRYNADHFTYVENAEALIEQHHLALSNCLAQSRLLAFGNEALDAAELKNLPIYKQYEGNQPSSTLLLKELNPYSLGMLIALYEHKVFVQSVIWNINPFDQWGVEKGKQIADQLLPILNGVQNDLSTLDASTRGLIKILLGKVDG.

Catalysis depends on Glu-360, which acts as the Proton donor. Residues His-391 and Lys-519 contribute to the active site.

It belongs to the GPI family.

The protein resides in the cytoplasm. The enzyme catalyses alpha-D-glucose 6-phosphate = beta-D-fructose 6-phosphate. The protein operates within carbohydrate biosynthesis; gluconeogenesis. It participates in carbohydrate degradation; glycolysis; D-glyceraldehyde 3-phosphate and glycerone phosphate from D-glucose: step 2/4. Catalyzes the reversible isomerization of glucose-6-phosphate to fructose-6-phosphate. This chain is Glucose-6-phosphate isomerase, found in Acinetobacter baumannii (strain AB0057).